A 180-amino-acid polypeptide reads, in one-letter code: ATP synthase subunit delta (180 aa).

Belongs to the ATPase delta chain family. As to quaternary structure, F-type ATPases have 2 components, F(1) - the catalytic core - and F(0) - the membrane proton channel. F(1) has five subunits: alpha(3), beta(3), gamma(1), delta(1), epsilon(1). CF(0) has four main subunits: a(1), b(1), b'(1) and c(10-14). The alpha and beta chains form an alternating ring which encloses part of the gamma chain. F(1) is attached to F(0) by a central stalk formed by the gamma and epsilon chains, while a peripheral stalk is formed by the delta, b and b' chains.

It localises to the cellular thylakoid membrane. F(1)F(0) ATP synthase produces ATP from ADP in the presence of a proton or sodium gradient. F-type ATPases consist of two structural domains, F(1) containing the extramembraneous catalytic core and F(0) containing the membrane proton channel, linked together by a central stalk and a peripheral stalk. During catalysis, ATP synthesis in the catalytic domain of F(1) is coupled via a rotary mechanism of the central stalk subunits to proton translocation. Functionally, this protein is part of the stalk that links CF(0) to CF(1). It either transmits conformational changes from CF(0) to CF(1) or is implicated in proton conduction. The sequence is that of ATP synthase subunit delta from Prochlorococcus marinus (strain MIT 9301).